Reading from the N-terminus, the 20-residue chain is Alkaline phosphatase (20 aa).

The disordered stretch occupies residues 1–20 (TDMLAVSVSSTDAIGHKYGT).

As to quaternary structure, homodimer; may be disulfide-linked. The N-terminus is blocked.

The enzyme catalyses a phosphate monoester + H2O = an alcohol + phosphate. Completely inhibited by thiol-reducing agents, such as DTT and 2-mercaptoethanol. Activity was also inhibited by sodium orthovanadate, sodium molybdate, N-ethylmaleimide, EDTA and zinc ion, but was not inhibited by okadaic acid. Acts against tyrosine-phosphatases. The sequence is that of Alkaline phosphatase from Prevotella intermedia.